Reading from the N-terminus, the 272-residue chain is MFRNQYDGDATTWSPQGRLHQVEYALEAIKQGSATVGLVSKTHAVLVALKRNAEELSSYQKKLIRIDDHIGIAIAGLAPDARVLSNYMKQEALSSKTLFTRPIPVRRLMSKVAEKAQINTQEYGRRPYGVGFLVIGYDESGPHLLEFQPSGLVLEYLGTSMGSRSQSARTYIERNLDTFPDSSREELILSALRALRDTLSKDQELTEENVSISVIGKDEKYTLYDQNDTKEWLDKLGDKGPAAARASRAAAEEPQAPTAEAILDSADAMETD.

Low complexity predominate over residues 243–261; it reads AARASRAAAEEPQAPTAEA. Residues 243 to 272 form a disordered region; the sequence is AARASRAAAEEPQAPTAEAILDSADAMETD.

The protein belongs to the peptidase T1A family. The 26S proteasome consists of a 20S proteasome core and two 19S regulatory subunits. The 20S proteasome core is composed of 28 subunits that are arranged in four stacked rings, resulting in a barrel-shaped structure. The two end rings are each formed by seven alpha subunits, and the two central rings are each formed by seven beta subunits. The catalytic chamber with the active sites is on the inside of the barrel.

The protein resides in the cytoplasm. It is found in the nucleus. Its function is as follows. The proteasome is a multicatalytic proteinase complex which is characterized by its ability to cleave peptides with Arg, Phe, Tyr, Leu, and Glu adjacent to the leaving group at neutral or slightly basic pH. The proteasome has an ATP-dependent proteolytic activity. In Schizosaccharomyces pombe (strain 972 / ATCC 24843) (Fission yeast), this protein is Probable proteasome subunit alpha type-6.